The chain runs to 708 residues: MATTAELFEEPFVADEYIERLVWRTPGGGSRGGPEAFDPKRLLEEFVNHIQELQIMDERIQRKVEKLEQQCQKEAKEFAKKVQELQKSNQVAFQHFQELDEHISYVATKVCHLGDQLEGVNTPRQRAVEAQKLMKYFNEFLDGELKSDVFTNSEKIKEAADVIQKLHLIAQELPFDRFSEVKSKIASKYHDLECQLIQEFTSAQRRGEVSRMREVAAVLLHFKGYSHCIDVYIKQCQEGAYLRNDIFEDAAILCQRVNKQVGDIFSNPEAVLAKLIQSVFEIKLQSFVKDQLEECRKSDAEQYLKSLYDLYTRTTGLSSKLMEFNLGTDKQTFLSKLIKSIFISYLENYIEVEIGYLKSRSAMILQRYYDSKNHQKRSIGTGGIQDLKERIRQRTNLPLGPSIDTHGETFLSQEVVVNLLQETKQAFERCHRLSDPSDLPRNAFRIFTILVEFLCIEHIDYALETGLAGIPSSDSRNANLYFLDVVQQANTIFHLFDKQFNDHLMPLISSSPKLSECLQKKKEIIEQMEMKLDTGIDRTLNCMIGQMKHILAAEQKKTDFKPEDENNVLIQYTNACVKVCVYVRKQVEKIKNSMDGKNVDTVLMELGVRFHRLIYEHLQQYSYSCMGGMLAICDVAEYRKCAKDFKIPMVLHLFDTLHALCNLLVVAPDNLKQVCSGEQLANLDKNILHSFVQLRADYRSARLARHFS.

A2 is subject to N-acetylalanine. The stretch at 40–101 forms a coiled coil; it reads KRLLEEFVNH…AFQHFQELDE (62 aa). Phosphothreonine is present on residues T122, T395, and T405. S412 is modified (phosphoserine).

It belongs to the SEC10 family. In terms of assembly, the exocyst complex is composed of EXOC1, EXOC2, EXOC3, EXOC4, EXOC5, EXOC6, EXOC7 and EXOC8. Interacts with EXOC3L1.

The protein resides in the cytoplasm. It is found in the midbody. In terms of biological role, component of the exocyst complex involved in the docking of exocytic vesicles with fusion sites on the plasma membrane. The sequence is that of Exocyst complex component 5 (Exoc5) from Mus musculus (Mouse).